The primary structure comprises 418 residues: Gamma-glutamyl phosphate reductase (418 aa).

The protein belongs to the gamma-glutamyl phosphate reductase family.

The protein localises to the cytoplasm. It carries out the reaction L-glutamate 5-semialdehyde + phosphate + NADP(+) = L-glutamyl 5-phosphate + NADPH + H(+). Its pathway is amino-acid biosynthesis; L-proline biosynthesis; L-glutamate 5-semialdehyde from L-glutamate: step 2/2. Catalyzes the NADPH-dependent reduction of L-glutamate 5-phosphate into L-glutamate 5-semialdehyde and phosphate. The product spontaneously undergoes cyclization to form 1-pyrroline-5-carboxylate. In Desulfotalea psychrophila (strain LSv54 / DSM 12343), this protein is Gamma-glutamyl phosphate reductase.